The following is a 65-amino-acid chain: Small ribosomal subunit protein eS27 (65 aa).

Zn(2+) contacts are provided by cysteine 20, cysteine 23, cysteine 39, and cysteine 42. The segment at 20–42 adopts a C4-type zinc-finger fold; sequence CIDCGNEQIVFSHPATRVRCLVC.

Belongs to the eukaryotic ribosomal protein eS27 family. In terms of assembly, part of the 30S ribosomal subunit. Zn(2+) is required as a cofactor.

This chain is Small ribosomal subunit protein eS27, found in Pyrococcus horikoshii (strain ATCC 700860 / DSM 12428 / JCM 9974 / NBRC 100139 / OT-3).